The chain runs to 910 residues: von Willebrand factor A domain-containing protein DDB_G0292740 (910 aa).

Residues 63 to 194 (AYQYYNVSSF…SITIHITMIS (132 aa)) form the VIT domain. The tract at residues 297-318 (IKNNPHSDSDSDSDDEENKKEN) is disordered. Positions 346-515 (EFIFLIDCSG…DMETEVMKLL (170 aa)) constitute a VWFA domain. Residues 703-719 (QYQQQQQQQQQNFNSGF) show a composition bias toward low complexity. Residues 703–815 (QYQQQQQQQQ…TQSESTPSND (113 aa)) form a disordered region. Residues 720–749 (APPPPPMMSSGPPPPPGSSFGAPPPPPPGG) show a composition bias toward pro residues. Residues 750–802 (AFPTSSISEKKSSSQSSSSYLPPTMSLSRKSSLSPSSPSKNYPSPKLSSPSLS) show a composition bias toward low complexity. A compositionally biased stretch (polar residues) spans 803–815 (YGSTQSESTPSND).

The polypeptide is von Willebrand factor A domain-containing protein DDB_G0292740 (Dictyostelium discoideum (Social amoeba)).